An 89-amino-acid chain; its full sequence is uncharacterized protein (89 aa).

Basic residues-rich tracts occupy residues 1–17 (MPPH…HGHH) and 65–89 (HHGH…HGHH). Disordered stretches follow at residues 1-25 (MPPH…ITPV) and 60-89 (LETG…HGHH).

This is an uncharacterized protein from Dictyostelium discoideum (Social amoeba).